The chain runs to 740 residues: 1,4-alpha-glucan branching enzyme GlgB (740 aa).

The Nucleophile role is filled by D419. E472 serves as the catalytic Proton donor.

Belongs to the glycosyl hydrolase 13 family. GlgB subfamily. In terms of assembly, monomer.

The catalysed reaction is Transfers a segment of a (1-&gt;4)-alpha-D-glucan chain to a primary hydroxy group in a similar glucan chain.. It participates in glycan biosynthesis; glycogen biosynthesis. Functionally, catalyzes the formation of the alpha-1,6-glucosidic linkages in glycogen by scission of a 1,4-alpha-linked oligosaccharide from growing alpha-1,4-glucan chains and the subsequent attachment of the oligosaccharide to the alpha-1,6 position. This chain is 1,4-alpha-glucan branching enzyme GlgB, found in Paramagnetospirillum magneticum (strain ATCC 700264 / AMB-1) (Magnetospirillum magneticum).